A 280-amino-acid chain; its full sequence is Band 7 protein AGAP004871 (280 aa).

The helical transmembrane segment at 23–43 threads the bilayer; sequence ILIFLSWVLVVLTMPFSLLVC.

The protein belongs to the band 7/mec-2 family.

It localises to the membrane. In Anopheles gambiae (African malaria mosquito), this protein is Band 7 protein AGAP004871.